Consider the following 259-residue polypeptide: Phosphatidylglycerol--prolipoprotein diacylglyceryl transferase (259 aa).

A run of 4 helical transmembrane segments spans residues 9–29 (IGPF…VLAV), 47–67 (IDFI…YYVI), 83–103 (IWNG…VLFI), and 109–129 (VLNP…AQAI). R131 contacts a 1,2-diacyl-sn-glycero-3-phospho-(1'-sn-glycerol). Helical transmembrane passes span 167-187 (MPTF…ICYL), 194-214 (LLEG…RFVI), and 227-247 (LRVS…FVIL).

It belongs to the Lgt family.

The protein localises to the cell membrane. It catalyses the reaction L-cysteinyl-[prolipoprotein] + a 1,2-diacyl-sn-glycero-3-phospho-(1'-sn-glycerol) = an S-1,2-diacyl-sn-glyceryl-L-cysteinyl-[prolipoprotein] + sn-glycerol 1-phosphate + H(+). It participates in protein modification; lipoprotein biosynthesis (diacylglyceryl transfer). Its function is as follows. Catalyzes the transfer of the diacylglyceryl group from phosphatidylglycerol to the sulfhydryl group of the N-terminal cysteine of a prolipoprotein, the first step in the formation of mature lipoproteins. The sequence is that of Phosphatidylglycerol--prolipoprotein diacylglyceryl transferase from Streptococcus uberis (strain ATCC BAA-854 / 0140J).